The chain runs to 353 residues: MDDKKAGAGVSAEKQKALAAALSQIEKQFGKGSIMRLGDGEIEQDIQVVSTGSLGLDIALGVGGLPRGRVVEIYGPESSGKTTLTLQVVAEMQKLGGTCAFIDAEHALDVQYAGKLGVDVGNLLISQPDTGEQALEITDALVRSGSIDLIVIDSVAALVPKAEIEGEMGDSLPGLQARLMSQGLRKLTGTIKRTNCLVIFINQIRMKIGVMFGSPETTTGGNALKFYASVRLDIRRIGSIKKGDEVVGNETKVKVVKNKVSPPFREAFFDILYGQGISRQGEIIDLGVDAKIVEKAGAWYSYNGEKIGQGKDNAREYLRENPDIADEIENKVRLALGVAPLNTVAGAPAEVEG.

75 to 82 (GPESSGKT) lines the ATP pocket.

Belongs to the RecA family.

It localises to the cytoplasm. In terms of biological role, can catalyze the hydrolysis of ATP in the presence of single-stranded DNA, the ATP-dependent uptake of single-stranded DNA by duplex DNA, and the ATP-dependent hybridization of homologous single-stranded DNAs. It interacts with LexA causing its activation and leading to its autocatalytic cleavage. The chain is Protein RecA from Cupriavidus necator (Alcaligenes eutrophus).